Consider the following 250-residue polypeptide: Protein BTG4 (250 aa).

This sequence belongs to the BTG family. In terms of assembly, interacts with CNOT7 and EIF4E. Interacts with CNOT8. As to expression, expressed in oocytes. Expressed in testis and in olfactory epithelium.

Adapter protein that bridges CNOT7, a catalytic subunit of the CCR4-NOT complex, to EIF4E, and facilitates maternal mRNAs decay during the maturation of oocytes and in the fertilized egg. It is therefore required for the maternal-zygotic transition (MZT), zygotic cleavage and initiation of embryonic development. The polypeptide is Protein BTG4 (Btg4) (Mus musculus (Mouse)).